The following is a 294-amino-acid chain: uncharacterized protein (294 aa).

A signal peptide spans Met1–Ala16. N-linked (GlcNAc...) asparagine; by host glycans are attached at residues Asn25 and Asn162.

This is an uncharacterized protein from Acheta domesticus (House cricket).